Here is a 163-residue protein sequence, read N- to C-terminus: Urease accessory protein UreE (163 aa).

The protein belongs to the UreE family.

It is found in the cytoplasm. Functionally, involved in urease metallocenter assembly. Binds nickel. Probably functions as a nickel donor during metallocenter assembly. This is Urease accessory protein UreE from Actinomyces naeslundii.